The sequence spans 413 residues: Multifunctional CCA protein (413 aa).

Positions 8 and 11 each coordinate ATP. Glycine 8 and arginine 11 together coordinate CTP. Mg(2+) contacts are provided by aspartate 21 and aspartate 23. ATP-binding residues include arginine 91, arginine 137, and arginine 140. CTP contacts are provided by arginine 91, arginine 137, and arginine 140. An HD domain is found at 228–329; it reads TGLHTLMTVT…VKLFDSIDAW (102 aa).

This sequence belongs to the tRNA nucleotidyltransferase/poly(A) polymerase family. Bacterial CCA-adding enzyme type 1 subfamily. In terms of assembly, monomer. Can also form homodimers and oligomers. The cofactor is Mg(2+). Ni(2+) serves as cofactor.

It catalyses the reaction a tRNA precursor + 2 CTP + ATP = a tRNA with a 3' CCA end + 3 diphosphate. The catalysed reaction is a tRNA with a 3' CCA end + 2 CTP + ATP = a tRNA with a 3' CCACCA end + 3 diphosphate. Catalyzes the addition and repair of the essential 3'-terminal CCA sequence in tRNAs without using a nucleic acid template. Adds these three nucleotides in the order of C, C, and A to the tRNA nucleotide-73, using CTP and ATP as substrates and producing inorganic pyrophosphate. tRNA 3'-terminal CCA addition is required both for tRNA processing and repair. Also involved in tRNA surveillance by mediating tandem CCA addition to generate a CCACCA at the 3' terminus of unstable tRNAs. While stable tRNAs receive only 3'-terminal CCA, unstable tRNAs are marked with CCACCA and rapidly degraded. This chain is Multifunctional CCA protein, found in Klebsiella pneumoniae subsp. pneumoniae (strain ATCC 700721 / MGH 78578).